The following is a 187-amino-acid chain: Pre-mRNA-splicing factor cwf7 (187 aa).

The protein belongs to the SPF27 family. Belongs to the 40S cdc5-associated complex (or cwf complex), a spliceosome sub-complex reminiscent of a late-stage spliceosome composed of the U2, U5 and U6 snRNAs and at least brr2, cdc5, cwf2/prp3, cwf3/syf1, cwf4/syf3, cwf5/ecm2, spp42/cwf6, cwf7/spf27, cwf8, cwf9, cwf10, cwf11, cwf12, prp45/cwf13, cwf14, cwf15, cwf16, cwf17, cwf18, cwf19, cwf20, cwf21, cwf22, cwf23, cwf24, cwf25, cwf26, cyp7/cwf27, cwf28, cwf29/ist3, lea1, msl1, prp5/cwf1, prp10, prp12/sap130, prp17, prp22, sap61, sap62, sap114, sap145, slu7, smb1, smd1, smd3, smf1, smg1 and syf2.

The protein localises to the nucleus. Involved in mRNA splicing. The protein is Pre-mRNA-splicing factor cwf7 (cwf7) of Schizosaccharomyces pombe (strain 972 / ATCC 24843) (Fission yeast).